Here is a 414-residue protein sequence, read N- to C-terminus: MFSKTLTIADFDPVLWDAMRKEARRQEDHVELIASENYASPMVMAAQGSVLTNKYAEGYPGKRYYGGCEYVDIAEQLAMDRALELFGAEHANVQAHSGSQANQAVYLSVLQPGDKIMGMSLAHGGHLTHGAKVNVSGKLFQVAAYGVRAEDGRIDYDAMAEQAERERPKMIVAGASAYSRVIDFARIGEIARSIGAYLLVDMAHIAGLVATGLHPSPVPHADFVTTTTHKTLRGPRGGLILCREQYAKKVNSLIFPGLQGGPLMHVIAAKAVAFREALQPEFKSYQQQVIHNAQTLSKVLAGRGYGAVSGGTDNHLFLLNLGEKVTGKEAEEALGQANITVNKNAVPFDIRPPAVTSGIRIGTPAATTRGFGEAEMHRLGNGIADVLDASSDAAVIERVRADMKALCHQFPVYG.

(6S)-5,6,7,8-tetrahydrofolate is bound by residues Leu121 and Gly125–Leu127. Lys230 carries the N6-(pyridoxal phosphate)lysine modification.

This sequence belongs to the SHMT family. As to quaternary structure, homodimer. It depends on pyridoxal 5'-phosphate as a cofactor.

The protein resides in the cytoplasm. The catalysed reaction is (6R)-5,10-methylene-5,6,7,8-tetrahydrofolate + glycine + H2O = (6S)-5,6,7,8-tetrahydrofolate + L-serine. It functions in the pathway one-carbon metabolism; tetrahydrofolate interconversion. Its pathway is amino-acid biosynthesis; glycine biosynthesis; glycine from L-serine: step 1/1. In terms of biological role, catalyzes the reversible interconversion of serine and glycine with tetrahydrofolate (THF) serving as the one-carbon carrier. This reaction serves as the major source of one-carbon groups required for the biosynthesis of purines, thymidylate, methionine, and other important biomolecules. Also exhibits THF-independent aldolase activity toward beta-hydroxyamino acids, producing glycine and aldehydes, via a retro-aldol mechanism. The sequence is that of Serine hydroxymethyltransferase from Acidithiobacillus ferrooxidans (strain ATCC 23270 / DSM 14882 / CIP 104768 / NCIMB 8455) (Ferrobacillus ferrooxidans (strain ATCC 23270)).